The following is a 329-amino-acid chain: Probable acyltransferase FabY (329 aa).

Residues 18–162 (YHLRVPQTEE…RHFLMIKPVA (145 aa)) form the N-acetyltransferase domain.

Belongs to the acetyltransferase family. FabY subfamily.

It participates in lipid metabolism; fatty acid biosynthesis. In terms of biological role, supports initiation of fatty acid biosynthesis in the absence of FabH. The chain is Probable acyltransferase FabY from Escherichia coli O157:H7.